Here is a 103-residue protein sequence, read N- to C-terminus: Large ribosomal subunit protein bL21 (103 aa).

Belongs to the bacterial ribosomal protein bL21 family. As to quaternary structure, part of the 50S ribosomal subunit. Contacts protein L20.

In terms of biological role, this protein binds to 23S rRNA in the presence of protein L20. This is Large ribosomal subunit protein bL21 from Desulforudis audaxviator (strain MP104C).